The primary structure comprises 93 residues: UPF0337 protein Bd3330 (93 aa).

Belongs to the UPF0337 (CsbD) family.

The protein is UPF0337 protein Bd3330 of Bdellovibrio bacteriovorus (strain ATCC 15356 / DSM 50701 / NCIMB 9529 / HD100).